Here is a 363-residue protein sequence, read N- to C-terminus: GTPase Obg (363 aa).

The 159-residue stretch at 1 to 159 (MKFIDEAKIY…LELRLELRVL (159 aa)) folds into the Obg domain. The OBG-type G domain maps to 160 to 338 (ADVGLLGLPN…LIYAISEALE (179 aa)). Residues 166–173 (GLPNAGKS), 191–195 (FTTLH), 213–216 (DVPG), 284–287 (NKLD), and 319–321 (AAI) each bind GTP. Positions 173 and 193 each coordinate Mg(2+). Residues 342 to 363 (RPEIGDLDDNDEDSDEIIRDTE) form a disordered region. Acidic residues predominate over residues 346-356 (GDLDDNDEDSD).

The protein belongs to the TRAFAC class OBG-HflX-like GTPase superfamily. OBG GTPase family. Monomer. Mg(2+) serves as cofactor.

It is found in the cytoplasm. Its function is as follows. An essential GTPase which binds GTP, GDP and possibly (p)ppGpp with moderate affinity, with high nucleotide exchange rates and a fairly low GTP hydrolysis rate. Plays a role in control of the cell cycle, stress response, ribosome biogenesis and in those bacteria that undergo differentiation, in morphogenesis control. The polypeptide is GTPase Obg (Dechloromonas aromatica (strain RCB)).